The chain runs to 78 residues: Large ribosomal subunit protein bL28 (78 aa).

Belongs to the bacterial ribosomal protein bL28 family.

This Prochlorococcus marinus (strain SARG / CCMP1375 / SS120) protein is Large ribosomal subunit protein bL28.